Here is a 354-residue protein sequence, read N- to C-terminus: Histidinol-phosphate aminotransferase (354 aa).

N6-(pyridoxal phosphate)lysine is present on Lys-210.

This sequence belongs to the class-II pyridoxal-phosphate-dependent aminotransferase family. Histidinol-phosphate aminotransferase subfamily. In terms of assembly, homodimer. The cofactor is pyridoxal 5'-phosphate.

The catalysed reaction is L-histidinol phosphate + 2-oxoglutarate = 3-(imidazol-4-yl)-2-oxopropyl phosphate + L-glutamate. It participates in amino-acid biosynthesis; L-histidine biosynthesis; L-histidine from 5-phospho-alpha-D-ribose 1-diphosphate: step 7/9. The sequence is that of Histidinol-phosphate aminotransferase from Clostridium botulinum (strain ATCC 19397 / Type A).